The sequence spans 365 residues: Putative fatty acid elongase 2 (365 aa).

Residues 1 to 68 (MPDSPTLHHN…SFEFIVNKTR (68 aa)) lie on the Lumenal side of the membrane. N-linked (GlcNAc...) asparagine glycosylation is found at Asn-17 and Asn-65. Residues 69-89 (FSSAPVVATIIISYYLLILVG) form a helical membrane-spanning segment. Residues 90 to 111 (GRIMRNRQPIRLQKIFQYYNLT) are Cytoplasmic-facing. The chain crosses the membrane as a helical span at residues 112–132 (FSIASAILALLIFEQVAPAIY). Topologically, residues 133–149 (KHGFFFSICNEKAWTQP) are lumenal. A helical transmembrane segment spans residues 150–170 (LVFLYYCAYISKFLELTDTFF). The Cytoplasmic segment spans residues 171–179 (LVLRKKPLQ). The helical transmembrane segment at 180–198 (FLHCYHHGATAVLVYTQIV) threads the bilayer. Residues 199–204 (GRTSIS) lie on the Lumenal side of the membrane. Residues 205–225 (WLIIEINLLVHVTMYYYYYLV) traverse the membrane as a helical segment. The Cytoplasmic portion of the chain corresponds to 226-241 (AKGIRVPWKKWVTRFQ). The chain crosses the membrane as a helical span at residues 242–262 (IVQFFADLGFIYFAVYTEVAY). The Lumenal segment spans residues 263–278 (RLKFYKACMGHCSGHP). Residues 279–299 (LAAFCGLATISSYLVLFIVFY) traverse the membrane as a helical segment. Over 300–365 (HNTYKKNAAL…PISSGLNNEK (66 aa)) the chain is Cytoplasmic.

Belongs to the ELO family.

It localises to the endoplasmic reticulum membrane. The enzyme catalyses a very-long-chain acyl-CoA + malonyl-CoA + H(+) = a very-long-chain 3-oxoacyl-CoA + CO2 + CoA. Functionally, may be involved in the synthesis of very long chain fatty acids. This chain is Putative fatty acid elongase 2, found in Schizosaccharomyces pombe (strain 972 / ATCC 24843) (Fission yeast).